Consider the following 141-residue polypeptide: Transcriptional regulator MraZ (141 aa).

SpoVT-AbrB domains are found at residues 5 to 47 and 76 to 119; these read TFNI…KPQD and ANFV…DKKL.

It belongs to the MraZ family. As to quaternary structure, homooctamer. Forms a ring.

It is found in the cytoplasm. Its subcellular location is the nucleoid. In Mycoplasma pneumoniae (strain ATCC 29342 / M129 / Subtype 1) (Mycoplasmoides pneumoniae), this protein is Transcriptional regulator MraZ.